The chain runs to 263 residues: Indolethylamine N-methyltransferase (263 aa).

Residue lysine 13 is modified to N6-succinyllysine. S-adenosyl-L-methionine contacts are provided by residues tyrosine 20, tyrosine 25, glycine 63, tyrosine 69, 85 to 87, and asparagine 90; that span reads DFT. At lysine 96 the chain carries N6-succinyllysine. S-adenosyl-L-methionine contacts are provided by residues 142-143 and leucine 163; that span reads DV.

This sequence belongs to the class I-like SAM-binding methyltransferase superfamily. NNMT/PNMT/TEMT family. In terms of assembly, monomer. As to expression, widely expressed. The highest levels were in thyroid, adrenal gland, adult and fetal lung. Intermediate levels in heart, placenta, skeletal muscle, testis, small intestine, pancreas, stomach, spinal cord, lymph node and trachea. Very low levels in adult and fetal kidney and liver, in adult spleen, thymus, ovary, colon and bone marrow. Not expressed in peripheral blood leukocytes and brain.

The protein resides in the cytoplasm. The enzyme catalyses a tertiary amine + S-adenosyl-L-methionine = a methylated tertiary amine + S-adenosyl-L-homocysteine + H(+). The catalysed reaction is a secondary amine + S-adenosyl-L-methionine = a methylated secondary amine + S-adenosyl-L-homocysteine + H(+). It carries out the reaction a primary amine + S-adenosyl-L-methionine = a methylated primary amine + S-adenosyl-L-homocysteine + H(+). It catalyses the reaction dimethyl sulfide + S-adenosyl-L-methionine = trimethylsulfonium + S-adenosyl-L-homocysteine. Its function is as follows. Functions as a thioether S-methyltransferase and is active with a variety of thioethers and the corresponding selenium and tellurium compounds, including 3-methylthiopropionaldehyde, dimethyl selenide, dimethyl telluride, 2-methylthioethylamine, 2-methylthioethanol, methyl-n-propyl sulfide and diethyl sulfide. Plays an important role in the detoxification of selenium compounds. Catalyzes the N-methylation of tryptamine and structurally related compounds. This chain is Indolethylamine N-methyltransferase (INMT), found in Homo sapiens (Human).